The following is a 125-amino-acid chain: UPF0734 protein DDB_G0273871/DDB_G0273177 (125 aa).

Belongs to the UPF0734 family.

This chain is UPF0734 protein DDB_G0273871/DDB_G0273177, found in Dictyostelium discoideum (Social amoeba).